We begin with the raw amino-acid sequence, 157 residues long: uncharacterized protein (157 aa).

This sequence belongs to the mimivirus L242/L243 family.

This is an uncharacterized protein from Acanthamoeba polyphaga (Amoeba).